The chain runs to 329 residues: DNA-directed RNA polymerase subunit alpha (329 aa).

The alpha N-terminal domain (alpha-NTD) stretch occupies residues 1–235 (MQGFVEDFLK…QQLEAFVDLR (235 aa)). Residues 249 to 329 (FEPVLLRPVD…NWPPKSLLED (81 aa)) form an alpha C-terminal domain (alpha-CTD) region.

The protein belongs to the RNA polymerase alpha chain family. As to quaternary structure, homodimer. The RNAP catalytic core consists of 2 alpha, 1 beta, 1 beta' and 1 omega subunit. When a sigma factor is associated with the core the holoenzyme is formed, which can initiate transcription.

It catalyses the reaction RNA(n) + a ribonucleoside 5'-triphosphate = RNA(n+1) + diphosphate. DNA-dependent RNA polymerase catalyzes the transcription of DNA into RNA using the four ribonucleoside triphosphates as substrates. The protein is DNA-directed RNA polymerase subunit alpha of Buchnera aphidicola subsp. Cinara cedri (strain Cc).